Consider the following 970-residue polypeptide: Sodium/calcium exchanger 1 (970 aa).

The N-terminal stretch at 1–32 (MLQFSLSPTLSMGFHVIAMVALLFSHVDHISA) is a signal peptide. At 33–71 (ETEMEGEGNETGECTGSYYCKKGVILPIWEPQDPSFGDK) the chain is on the extracellular side. Asn-41 is a glycosylation site (N-linked (GlcNAc...) asparagine). A helical transmembrane segment spans residues 72–92 (IARATVYFVAMVYMFLGVSII). Residues 93 to 133 (ADRFMSSIEVITSQEKEITIKKPNGETTKTTVRIWNETVSN) are Cytoplasmic-facing. The chain crosses the membrane as a helical span at residues 134 to 154 (LTLMALGSSAPEILLSVIEVC). The Alpha-1 repeat unit spans residues 138–178 (ALGSSAPEILLSVIEVCGHNFTAGDLGPSTIVGSAAFNMFI). Topologically, residues 155–167 (GHNFTAGDLGPST) are extracellular. Asn-157 is a glycosylation site (N-linked (GlcNAc...) asparagine). The helical transmembrane segment at 168 to 188 (IVGSAAFNMFIIIALCVYVVP) threads the bilayer. The Cytoplasmic portion of the chain corresponds to 189-201 (DGETRKIKHLRVF). The chain crosses the membrane as a helical span at residues 202 to 222 (FVTAAWSIFAYTWLYIILSVS). Over 223–228 (SPGVVE) the chain is Extracellular. Residues 229–249 (VWEGLLTFFFFPICVVFAWVA) traverse the membrane as a helical segment. The Cytoplasmic segment spans residues 250-797 (DRRLLFYKYV…FVPPTEYWNG (548 aa)). Residues 251-270 (RRLLFYKYVYKRYRAGKQRG) form a putative calmodulin-binding region region. 2 positions are modified to phosphoserine: Ser-282 and Ser-389. 2 Calx-beta domains span residues 393–493 (VNTE…VHLS) and 524–624 (ATVT…LEIG). Ca(2+) contacts are provided by Glu-417, Asp-453, Asp-478, Asp-479, Ile-481, Glu-483, Glu-486, Asp-530, Asp-531, Asp-532, Glu-548, Asp-584, Asp-610, Glu-611, Glu-612, and Glu-715. Residues 798 to 818 (WACFIVSILMIGLLTAFIGDL) form a helical membrane-spanning segment. At 819-821 (ASH) the chain is on the extracellular side. The chain crosses the membrane as a helical span at residues 822–842 (FACTIALKDSVTAVVFVALGT). The Alpha-2 repeat unit spans residues 839-875 (ALGTSVPDTFASKVAATQDQYADASIGNVTGSNAVNV). Over 843-871 (SVPDTFASKVAATQDQYADASIGNVTGSN) the chain is Cytoplasmic. A helical membrane pass occupies residues 872–892 (AVNVFLGIGVAWSIAAIYHAA). Topologically, residues 893–903 (NGEQFKVSPGT) are extracellular. Residues 904–924 (LAFSVTLFTIFAFINVGVLLY) form a helical membrane-spanning segment. The Cytoplasmic portion of the chain corresponds to 925–941 (RRRPEIGGELGGPRTAK). The helical transmembrane segment at 942–962 (LLTSCLFVLLWLLYIFFSSLE) threads the bilayer. The Extracellular portion of the chain corresponds to 963 to 970 (AYCHIKGF).

Belongs to the Ca(2+):cation antiporter (CaCA) (TC 2.A.19) family. SLC8 subfamily.

The protein resides in the cell membrane. The enzyme catalyses Ca(2+)(in) + 3 Na(+)(out) = Ca(2+)(out) + 3 Na(+)(in). Activated by micromolar levels of Ca(2+). Mediates the exchange of one Ca(2+) ion against three to four Na(+) ions across the cell membrane, and thereby contributes to the regulation of cytoplasmic Ca(2+) levels and Ca(2+)-dependent cellular processes. Contributes to Ca(2+) transport during excitation-contraction coupling in muscle. In a first phase, voltage-gated channels mediate the rapid increase of cytoplasmic Ca(2+) levels due to release of Ca(2+) stores from the endoplasmic reticulum. SLC8A1 mediates the export of Ca(2+) from the cell during the next phase, so that cytoplasmic Ca(2+) levels rapidly return to baseline. Required for normal embryonic heart development and the onset of heart contractions. The protein is Sodium/calcium exchanger 1 (SLC8A1) of Bos taurus (Bovine).